A 592-amino-acid polypeptide reads, in one-letter code: 3-hydroxy-3-methylglutaryl-coenzyme A reductase 1 (592 aa).

The disordered stretch occupies residues 1–45; it reads MDLRRRPPKPPVTNNNNSNGSFRSYQPRTSDDDHRRRATTIAPPP. Residues 12–28 are compositionally biased toward polar residues; that stretch reads VTNNNNSNGSFRSYQPR. N-linked (GlcNAc...) asparagine glycans are attached at residues N16 and N19. 2 helical membrane-spanning segments follow: residues 47–69 and 97–117; these read ASDA…FFSV and AIIA…IDFV. The tract at residues 118–171 is linker; the sequence is QSFISRASGDAWDLADTIDDDDHRLVTCSPPTPIVSVAKLPNPEPIVTESLPEE. The segment at 172-592 is catalytic; it reads DEEIVKSVID…GATTTTTTTT (421 aa). The active-site Charge relay system is E265. N329 carries an N-linked (GlcNAc...) asparagine glycan. Catalysis depends on charge relay system residues K397 and D473. H571 (proton donor) is an active-site residue. The N-linked (GlcNAc...) asparagine glycan is linked to N575. The residue at position 577 (S577) is a Phosphoserine.

This sequence belongs to the HMG-CoA reductase family. Interacts (via N-terminus) with B''ALPHA and B''BETA. Post-translationally, inactivated by phosphorylation at Ser-577 by KIN10 activated form. Probably also phosphorylated at additional sites. As to expression, found in all tissues. Isoform Short is expressed at low levels specifically in flowers. Expressed in both the tapetum and microspores.

Its subcellular location is the endoplasmic reticulum membrane. The catalysed reaction is (R)-mevalonate + 2 NADP(+) + CoA = (3S)-3-hydroxy-3-methylglutaryl-CoA + 2 NADPH + 2 H(+). It participates in metabolic intermediate biosynthesis; (R)-mevalonate biosynthesis; (R)-mevalonate from acetyl-CoA: step 3/3. Regulated at the post-translational level in response to alterations of sphingolipid and sterol biosynthetic pathways. Negatively regulated by a PP2A-dependent dephosphorylation occurring at a site different than Ser-577. Completely inhibited by mevinolin (IC(50) = 12.5 nM). Reversibly inactivated by phosphorylation at Ser-577 by spinach or Brassica oleracea HMGR kinases in a cell-free system. Down-regulated by KIN10 through its phosphorylation at Ser-577. Its function is as follows. Catalyzes the synthesis of mevalonate, the specific precursor of all isoprenoid compounds present in plants. This is 3-hydroxy-3-methylglutaryl-coenzyme A reductase 1 from Arabidopsis thaliana (Mouse-ear cress).